A 626-amino-acid chain; its full sequence is MSQNQETRGFQSEVKQLLQLMIHSLYSNKEIFLRELISNASDAADKLRFKALSNPALYEGDGDLRVRVSFDADKGIITISDNGIGMTREQVIDHLGTIAKSGTKEFLTALGQDQAKNSQLIGQFGVGFYSAFIVADKVTVKTRAAGEEADKAVLWESAGEGEYSVADIEKKSRGTDVILHLREDEKEFLNEWRLREIIGKYSDHIGLPVEMLTKEYDDEGKECGEKWEKINKSDALWTRSKNDVSDEEYKAFYKHLSHDFSDPVTWAHNKVEGNQAYTSLLYVPAKAPWDLFNREHKHGLKLYVQRVFIMDDAEQFMPNYLRFMRGLIDSNDLPLNVSREILQDNKITAALRKALTKRSLQMLEKLAKDDAEKYLQFWKEFGLVLKEGPAEDFANKETIAKLLRFASTHNDGCEQTVSLEDYILRMKEGQKAIYYITADSYVAAKNSPHLELFNKKGIEVLLLSDRIDEWMLSYLTEFDGKQLQSITKADLDLGDLADKESETQKQRDEAFGSFIERVKNLLGERVKTVRLTHNLTDTPAVVSTDNDQMTTQMAKLFAAAGQPVPEVKYTFELNPEHHLVKKVADIADEIEFADWVELLLEQAMLAERGSLENPAAFIKRINKLLG.

The a; substrate-binding stretch occupies residues 1–339 (MSQNQETRGF…SNDLPLNVSR (339 aa)). The b stretch occupies residues 340–555 (EILQDNKITA…NDQMTTQMAK (216 aa)). The segment at 556–626 (LFAAAGQPVP…FIKRINKLLG (71 aa)) is c.

The protein belongs to the heat shock protein 90 family. Homodimer.

The protein resides in the cytoplasm. Its function is as follows. Molecular chaperone. Has ATPase activity. The protein is Chaperone protein HtpG of Haemophilus influenzae (strain PittGG).